Here is a 161-residue protein sequence, read N- to C-terminus: Hydrogenase expression/formation protein HoxO (161 aa).

The protein belongs to the HupG/HyaE family.

This is Hydrogenase expression/formation protein HoxO (hoxO) from Cupriavidus necator (strain ATCC 17699 / DSM 428 / KCTC 22496 / NCIMB 10442 / H16 / Stanier 337) (Ralstonia eutropha).